A 191-amino-acid chain; its full sequence is Repressor Rok (191 aa).

Residues 2–43 (FNEREALRLRLEQLNEAEVKVIREYQIERDKIYAKLRELDRN) are a coiled coil. A compositionally biased stretch (low complexity) spans 75–96 (SYQPQSQQQSVQPQLQSISSLP). The interval 75–116 (SYQPQSQQQSVQPQLQSISSLPAGIPDGTTRRRRGTARPGSK) is disordered. The interval 95–191 (LPAGIPDGTT…EIESAESANE (97 aa)) is DNA-binding.

It localises to the cytoplasm. The protein resides in the nucleoid. Its function is as follows. Repressor of comK, the master regulator of competence development. Overexpression seems to be lethal. Represses at least 20 genes that specify membrane-localized and secreted proteins, including some that encode products with antibiotic activity. Binds to many AT-rich sites in the chromosome, many of which are known or thought to derive from horizontal gene transfer; helps keep mobile element ICEBs1 quiescent in the genome. Binds to its own promoter and is thus probably autoregulatory. In Bacillus subtilis (strain 168), this protein is Repressor Rok.